The primary structure comprises 1057 residues: MPKRDDIQTILVIGSGPIIIGQAAEFDYAGTQACLALKEEGYRVILVNSNPATIMTDKEIADKVYIEPLTHDFIARIIRKEQPDALLPTLGGQTGLNMAIQLHDSGVLEANNVKLLGTELKSIQQAEDRELFRSLMNDLNVPVPESDIVNTVEQAFAFKDEVGYPLIVRPAFTMGGTGGGICYNDEELKEVVSNGLHYSPATQCLIEKSIAGYKEIEYEVMRDKNDNAIVVCNMENIDPVGIHTGDSIVVAPSQTLSDVEYQMLRDVSLKVIRALGIEGGCNVQLALDPHSFNYYIIEVNPRVSRSSALASKATGYPIAKLAAKIAVGLTLDEMLNPVTGTSYAAFEPTLDYVISKIPRFPFDKFEKGERELGTQMKATGEVMAIGRTYEESLLKAIRSLEYGVHHLGLPNGESFDLDYIKERISHQDDERLFFIGEAIRRGTTLEEIHNMTQIDYFFLNKFQNIINIEHELKNHPGDLDYLKYAKDYGFSDRVIAHRFGMTESEVYQLRQDNNIKPVYKMVDTCAAEFESTTPYYYGTYETENESIVTDKEKILVLGSGPIRIGQGVEFDYATVHAVWAIQNAGYEAIIVNNNPETVSTDFSISDKLYFEPLTEEDVMNIINLEQPKGVVVQFGGQTAINLADKLAKHGVKILGTTLENLNRAEDRKEFEALLHTIDVPQPKGKTATSPKEALENAREIGYPVVVRPSYVLGGRAMEIVNSDAELENYMEQAVKASPEHPVLVDRYLTGKEIEVDAISDGETVIIPGIMEHIERAGVHSGDSIAVYPPQTLSQEDIDTLEDYTIKLAKGLNIVGLINIQFVIAHDGVYVLEVNPRASRTVPFLSKITDIQMAQLAMQAIMGTRLKDLGYKQGVQPYSEGVFVKAPVFSFNKLKNVDVTLGPEMKSTGEVMGKDLTLEKALYKGLTGSGVEVKDHGTVLMTVSDKDKDEIVKIAHRLNEVGYKILATQGTAEKLKEDNIPVEVVGKIGGDDDLLTRIQNGEVQIVINTMTKGKEVERDGFQIRRTTVENGVPCLTSLDTANALTNVIESMTFSMRTM.

The interval 1–401 (MPKRDDIQTI…SLLKAIRSLE (401 aa)) is carboxyphosphate synthetic domain. ATP is bound by residues Arg129, Arg169, Gly175, Gly176, Lys208, Ile210, Glu215, Gly241, Ile242, His243, Gln284, and Glu298. In terms of domain architecture, ATP-grasp 1 spans 133–327 (RSLMNDLNVP…IAKLAAKIAV (195 aa)). Mg(2+) is bound by residues Gln284, Glu298, and Asn300. Residues Gln284, Glu298, and Asn300 each coordinate Mn(2+). Residues 402–546 (YGVHHLGLPN…YGTYETENES (145 aa)) form an oligomerization domain region. Residues 547–929 (IVTDKEKILV…ALYKGLTGSG (383 aa)) are carbamoyl phosphate synthetic domain. Residues 671–861 (EALLHTIDVP…MAQLAMQAIM (191 aa)) form the ATP-grasp 2 domain. ATP contacts are provided by Arg707, Arg746, Leu748, Glu752, Gly777, Val778, His779, Ser780, Gln820, and Glu832. Mg(2+) is bound by residues Gln820, Glu832, and Asn834. Gln820, Glu832, and Asn834 together coordinate Mn(2+). The region spanning 930-1057 (VEVKDHGTVL…ESMTFSMRTM (128 aa)) is the MGS-like domain. The segment at 930–1057 (VEVKDHGTVL…ESMTFSMRTM (128 aa)) is allosteric domain.

It belongs to the CarB family. Composed of two chains; the small (or glutamine) chain promotes the hydrolysis of glutamine to ammonia, which is used by the large (or ammonia) chain to synthesize carbamoyl phosphate. Tetramer of heterodimers (alpha,beta)4. Requires Mg(2+) as cofactor. Mn(2+) is required as a cofactor.

It catalyses the reaction hydrogencarbonate + L-glutamine + 2 ATP + H2O = carbamoyl phosphate + L-glutamate + 2 ADP + phosphate + 2 H(+). The enzyme catalyses hydrogencarbonate + NH4(+) + 2 ATP = carbamoyl phosphate + 2 ADP + phosphate + 2 H(+). It participates in amino-acid biosynthesis; L-arginine biosynthesis; carbamoyl phosphate from bicarbonate: step 1/1. Its pathway is pyrimidine metabolism; UMP biosynthesis via de novo pathway; (S)-dihydroorotate from bicarbonate: step 1/3. Large subunit of the glutamine-dependent carbamoyl phosphate synthetase (CPSase). CPSase catalyzes the formation of carbamoyl phosphate from the ammonia moiety of glutamine, carbonate, and phosphate donated by ATP, constituting the first step of 2 biosynthetic pathways, one leading to arginine and/or urea and the other to pyrimidine nucleotides. The large subunit (synthetase) binds the substrates ammonia (free or transferred from glutamine from the small subunit), hydrogencarbonate and ATP and carries out an ATP-coupled ligase reaction, activating hydrogencarbonate by forming carboxy phosphate which reacts with ammonia to form carbamoyl phosphate. This is Carbamoyl phosphate synthase large chain from Staphylococcus haemolyticus (strain JCSC1435).